The chain runs to 638 residues: Growth hormone receptor (638 aa).

The signal sequence occupies residues 1–18; sequence MDLWQLLLTLAVAGSGNA. The Extracellular portion of the chain corresponds to 19-264; it reads VSGSEATPAI…SPFACEEDFQ (246 aa). Cystine bridges form between C56–C66 and C101–C112. The N-linked (GlcNAc...) asparagine glycan is linked to N115. C126 and C140 are joined by a disulfide. One can recognise a Fibronectin type-III domain in the interval 151-254; that stretch reads PPIGLNWTLL…EVLYVALPQM (104 aa). 3 N-linked (GlcNAc...) asparagine glycosylation sites follow: N156, N161, and N200. The WSXWS motif signature appears at 240 to 244; it reads YGEFS. The chain crosses the membrane as a helical span at residues 265–288; it reads FPWFLIIIFGIFGLTMILFLFIFS. Over 289-638 the chain is Cytoplasmic; it reads KQQRIKMLIL…STDQLNKIMP (350 aa). The segment at 294–379 is required for JAK2 binding; it reads KMLILPPVPV…HEKSLNILGA (86 aa). The Box 1 motif signature appears at 297–305; it reads ILPPVPVPK. The UbE motif signature appears at 340–349; that stretch reads DSWVEFIELD. S341 is subject to Phosphoserine. Polar residues predominate over residues 429 to 446; that stretch reads KNQSNSPSTDTAPNTQQP. The disordered stretch occupies residues 429 to 448; it reads KNQSNSPSTDTAPNTQQPGV. Residues Y487 and Y595 each carry the phosphotyrosine modification.

Belongs to the type I cytokine receptor family. Type 1 subfamily. As to quaternary structure, on growth hormone (GH) binding, forms homodimers and binds JAK2 via a box 1-containing domain. Post-translationally, the soluble form (GHBP) is produced by phorbol ester-promoted proteolytic cleavage at the cell surface (shedding) by ADAM17/TACE. Shedding is inhibited by growth hormone (GH) binding to the receptor probably due to a conformational change in GHR rendering the receptor inaccessible to ADAM17. On GH binding, phosphorylated on tyrosine residues in the cytoplasmic domain by JAK2. In terms of processing, ubiquitinated by the ECS(SOCS2) complex following ligand-binding and phosphorylation by JAK2, leading to its degradation by the proteasome. Regulation by the ECS(SOCS2) complex acts as a negative feedback loop of growth hormone receptor signaling. Ubiquitination is not sufficient for GHR internalization.

The protein localises to the cell membrane. It is found in the secreted. Its function is as follows. Receptor for pituitary gland growth hormone (GH1) involved in regulating postnatal body growth. On ligand binding, couples to the JAK2/STAT5 pathway. The soluble form (GHBP) acts as a reservoir of growth hormone in plasma and may be a modulator/inhibitor of GH signaling. The chain is Growth hormone receptor (GHR) from Ailuropoda melanoleuca (Giant panda).